The chain runs to 375 residues: Alcohol dehydrogenase 1 (375 aa).

Ser2 carries the N-acetylserine modification. 7 residues coordinate Zn(2+): Cys47, His68, Cys98, Cys101, Cys104, Cys112, and Cys175. NAD(+)-binding positions include 200–205, Asp224, and Lys229; that span reads WSGRVG. The residue at position 234 (Lys234) is an N6-succinyllysine. Residue 293 to 295 coordinates NAD(+); that stretch reads VGV. Position 340 is an N6-succinyllysine (Lys340). Position 370 (Arg370) interacts with NAD(+).

It belongs to the zinc-containing alcohol dehydrogenase family. Class-I subfamily. Homodimer. The cofactor is Zn(2+).

It localises to the cytoplasm. It catalyses the reaction a primary alcohol + NAD(+) = an aldehyde + NADH + H(+). The enzyme catalyses a secondary alcohol + NAD(+) = a ketone + NADH + H(+). The polypeptide is Alcohol dehydrogenase 1 (ADH1) (Geomys attwateri (Attwater's pocket gopher)).